The sequence spans 359 residues: Molybdenum import ATP-binding protein ModC (359 aa).

In terms of domain architecture, ABC transporter spans 1–229 (MLELNFSQQL…SALRPWLQRE (229 aa)). 31–38 (GLSGAGKT) serves as a coordination point for ATP. A Mop domain is found at 289–354 (SSSIRNILPV…IKSVSFNRQN (66 aa)).

The protein belongs to the ABC transporter superfamily. Molybdate importer (TC 3.A.1.8) family. In terms of assembly, the complex is composed of two ATP-binding proteins (ModC), two transmembrane proteins (ModB) and a solute-binding protein (ModA).

It localises to the cell inner membrane. The catalysed reaction is molybdate(out) + ATP + H2O = molybdate(in) + ADP + phosphate + H(+). Part of the ABC transporter complex ModABC involved in molybdenum import. Responsible for energy coupling to the transport system. The polypeptide is Molybdenum import ATP-binding protein ModC (Yersinia pseudotuberculosis serotype I (strain IP32953)).